The sequence spans 923 residues: Transportin-3 (923 aa).

Methionine 1 carries the post-translational modification N-acetylmethionine. Serine 74 bears the Phosphoserine mark. Threonine 896 carries the post-translational modification Phosphothreonine.

As to quaternary structure, interacts with (GTP-bound) Ran. Interacts with (phosphorylated) SFRS1 and SFRS2; leading to their nuclear import. Interacts with NUP62. Interacts with RBM4. Interacts with CPSF6, promoting its nuclear import. (Microbial infection) Interacts with the HIV-1 pre-integration complex (PIC), which is composed of viral genome, matrix protein, Vpr and integrase. Interacts with HIV-1 integrase protein; the interaction is direct. As to expression, expressed in skeletal muscle.

The protein resides in the nucleus envelope. It is found in the cytoplasm. Its function is as follows. Importin, which transports target proteins into the nucleus. Specifically mediates the nuclear import of splicing factor serine/arginine (SR) proteins, such as RBM4, SFRS1 and SFRS2, by recognizing phosphorylated SR domains. Also mediates the nuclear import of serine/arginine (SR) protein CPSF6, independently of CPSF6 phosphorylation. The nuclear import process is regulated by the small GTPase Ran that partitions between cytoplasm and nucleus in the predominantly GDP- and GTP-bound form, respectively. Importin associates with target cargo proteins in the cytoplasm, and the competitive binding of GTP-bound Ran induces the release of cargos in the nucleus. In terms of biological role, (Microbial infection) Involved in immunodeficiency virus (HIV-1) infection by importing the pre-integration complex (PIC) into the nucleus. Required for a nuclear maturation step of HIV-1 prior to integration. The chain is Transportin-3 from Homo sapiens (Human).